The chain runs to 148 residues: EKC/KEOPS complex subunit Lage3 (148 aa).

The segment at 1-21 is disordered; it reads MQTAHTGLSHTADGADGQTSR.

This sequence belongs to the CTAG/PCC1 family. In terms of assembly, component of the EKC/KEOPS complex composed of at least GON7, TP53RK, TPRKB, OSGEP and LAGE3; the whole complex dimerizes.

The protein localises to the cytoplasm. The protein resides in the nucleus. Its function is as follows. Component of the EKC/KEOPS complex that is required for the formation of a threonylcarbamoyl group on adenosine at position 37 (t(6)A37) in tRNAs that read codons beginning with adenine. The complex is probably involved in the transfer of the threonylcarbamoyl moiety of threonylcarbamoyl-AMP (TC-AMP) to the N6 group of A37. LAGE3 functions as a dimerization module for the complex. This chain is EKC/KEOPS complex subunit Lage3, found in Mus musculus (Mouse).